A 59-amino-acid polypeptide reads, in one-letter code: Small ribosomal subunit protein bS21 (59 aa).

The interval 34 to 59 (KHEHYEKPSVKRKKKSEAARRRKRSF) is disordered. Over residues 43 to 59 (VKRKKKSEAARRRKRSF) the composition is skewed to basic residues.

Belongs to the bacterial ribosomal protein bS21 family.

This chain is Small ribosomal subunit protein bS21, found in Desulforudis audaxviator (strain MP104C).